Here is a 116-residue protein sequence, read N- to C-terminus: SGSCSLKTCWLQLADFRKVGDLLKEKYDSAAAMKITRKGKLELVNSRFNPPTPDDLVYLDQSPDYCVKNKSTGSLGTMGRLCNKTSEGMDGCELMCCGRGYDQFKTVQVERCHCKF.

Serine 1 carries the O-palmitoleoyl serine; by PORCN lipid modification. Asparagine 69 and asparagine 83 each carry an N-linked (GlcNAc...) asparagine glycan. A disulfide bridge connects residues cysteine 82 and cysteine 97.

This sequence belongs to the Wnt family. Palmitoleoylation is required for efficient binding to frizzled receptors. Depalmitoleoylation leads to Wnt signaling pathway inhibition.

Its subcellular location is the secreted. The protein resides in the extracellular space. It is found in the extracellular matrix. Its function is as follows. Ligand for members of the frizzled family of seven transmembrane receptors. Probable developmental protein. May be a signaling molecule which affects the development of discrete regions of tissues. Is likely to signal over only few cell diameters. The sequence is that of Protein Wnt-5b (WNT-5B) from Alopias vulpinus (Common thresher shark).